A 33-amino-acid polypeptide reads, in one-letter code: Gaegurin-3 (33 aa).

Cys27 and Cys33 are oxidised to a cystine.

This sequence belongs to the frog skin active peptide (FSAP) family. Brevinin subfamily. In terms of assembly, monomer. Expressed by the skin glands.

The protein resides in the secreted. Its function is as follows. Has a non-hemolytic activity. Has a broad spectrum of activity against both Gram-positive and Gram-negative bacteria, fungi and protozoa. This Glandirana rugosa (Japanese wrinkled frog) protein is Gaegurin-3 (GGN3).